The sequence spans 402 residues: Probable glutamate 5-kinase (402 aa).

Substrate contacts are provided by Ser58, Asp145, and Asn157. Residues 177 to 178 (TD) and 218 to 224 (TGGMKTK) contribute to the ATP site. The 79-residue stretch at 295–373 (HGSLEIDRGA…KEIASILGYN (79 aa)) folds into the PUA domain.

It belongs to the glutamate 5-kinase family.

The protein localises to the cytoplasm. It carries out the reaction L-glutamate + ATP = L-glutamyl 5-phosphate + ADP. The protein operates within amino-acid biosynthesis; L-proline biosynthesis; L-glutamate 5-semialdehyde from L-glutamate: step 1/2. Its function is as follows. Catalyzes the transfer of a phosphate group to glutamate to form glutamate 5-phosphate which rapidly cyclizes to 5-oxoproline. The chain is Probable glutamate 5-kinase from Schizosaccharomyces pombe (strain 972 / ATCC 24843) (Fission yeast).